A 223-amino-acid chain; its full sequence is MRLVIARCSVDYAGRLTAHLPSAPRLILVKADGSVSIHADDRAYKPLNWMSPPCTLKEGADGEAGVWTVVNKAGEKLIITMEEVLHDSSYELGVDPGLIKDGVEAHLQELLADRIEILGEGHTLIRREYPTAIGPVDILCRDANGQTVAVELKRRGDIDGVEQLTRYLELLNRDPHLAPVRGVFAAQEIKPQARVLATDRGIGCLVLDYDAMRGIEDDKLRLF.

The protein belongs to the NucS endonuclease family.

The protein resides in the cytoplasm. Functionally, cleaves both 3' and 5' ssDNA extremities of branched DNA structures. The sequence is that of Endonuclease NucS from Streptomyces griseus subsp. griseus (strain JCM 4626 / CBS 651.72 / NBRC 13350 / KCC S-0626 / ISP 5235).